A 460-amino-acid polypeptide reads, in one-letter code: tRNA modification GTPase MnmE (460 aa).

Arginine 29, glutamate 91, and lysine 132 together coordinate (6S)-5-formyl-5,6,7,8-tetrahydrofolate. Residues 227 to 383 (GISIALIGKT…LIDTIIKKCG (157 aa)) enclose the TrmE-type G domain. Position 237 (asparagine 237) interacts with K(+). GTP-binding positions include 237–242 (NVGKSS), 256–262 (TNIPGTT), and 281–284 (DTAG). Mg(2+) is bound at residue serine 241. Positions 256, 258, and 261 each coordinate K(+). Threonine 262 contributes to the Mg(2+) binding site. Position 460 (lysine 460) interacts with (6S)-5-formyl-5,6,7,8-tetrahydrofolate.

The protein belongs to the TRAFAC class TrmE-Era-EngA-EngB-Septin-like GTPase superfamily. TrmE GTPase family. As to quaternary structure, homodimer. Heterotetramer of two MnmE and two MnmG subunits. The cofactor is K(+).

It is found in the cytoplasm. Its function is as follows. Exhibits a very high intrinsic GTPase hydrolysis rate. Involved in the addition of a carboxymethylaminomethyl (cmnm) group at the wobble position (U34) of certain tRNAs, forming tRNA-cmnm(5)s(2)U34. This is tRNA modification GTPase MnmE from Prochlorococcus marinus (strain MIT 9215).